The sequence spans 103 residues: UPF0235 protein Rleg2_3707 (103 aa).

Belongs to the UPF0235 family.

This chain is UPF0235 protein Rleg2_3707, found in Rhizobium leguminosarum bv. trifolii (strain WSM2304).